We begin with the raw amino-acid sequence, 38 residues long: Cytochrome b559 subunit beta (38 aa).

A helical membrane pass occupies residues 13–29 (WLAVHALAVPTVFFLGS). Histidine 17 is a binding site for heme.

Belongs to the PsbE/PsbF family. Heterodimer of an alpha subunit and a beta subunit. PSII is composed of 1 copy each of membrane proteins PsbA, PsbB, PsbC, PsbD, PsbE, PsbF, PsbH, PsbI, PsbJ, PsbK, PsbL, PsbM, PsbT, PsbX, PsbY, PsbZ, Psb30/Ycf12, at least 3 peripheral proteins of the oxygen-evolving complex and a large number of cofactors. It forms dimeric complexes. Requires heme b as cofactor.

It is found in the plastid. It localises to the chloroplast thylakoid membrane. Functionally, this b-type cytochrome is tightly associated with the reaction center of photosystem II (PSII). PSII is a light-driven water:plastoquinone oxidoreductase that uses light energy to abstract electrons from H(2)O, generating O(2) and a proton gradient subsequently used for ATP formation. It consists of a core antenna complex that captures photons, and an electron transfer chain that converts photonic excitation into a charge separation. This is Cytochrome b559 subunit beta from Ostreococcus tauri.